A 125-amino-acid chain; its full sequence is Holo-[acyl-carrier-protein] synthase (125 aa).

Mg(2+)-binding residues include Asp-6 and Glu-55.

Belongs to the P-Pant transferase superfamily. AcpS family. Mg(2+) is required as a cofactor.

Its subcellular location is the cytoplasm. The catalysed reaction is apo-[ACP] + CoA = holo-[ACP] + adenosine 3',5'-bisphosphate + H(+). Its function is as follows. Transfers the 4'-phosphopantetheine moiety from coenzyme A to a Ser of acyl-carrier-protein. The sequence is that of Holo-[acyl-carrier-protein] synthase from Chlorobium phaeovibrioides (strain DSM 265 / 1930) (Prosthecochloris vibrioformis (strain DSM 265)).